The sequence spans 97 residues: U-reduvitoxin-Pr11a (97 aa).

The signal sequence occupies residues 1-20; the sequence is MKTALFLVFALAFIAVEGKM. 2 consecutive Pacifastin domains span residues 22 to 59 and 62 to 97; these read RACSKPGQTVLAPDGCNHCRCSEKGILMACTKMMCPPR and EKSCKPGTTFKHKDGCNTCKCSDDGKNALCTSKLCL. Intrachain disulfides connect C24-C42, C37-C56, and C40-C51. The interval 57–59 is pro-Pro-Arg motif necessary for proteolytic processing; the sequence is PPR. Intrachain disulfides connect C65/C82, C77/C96, and C80/C91.

It belongs to the protease inhibitor I19 family. In terms of tissue distribution, expressed by the venom gland.

The protein resides in the secreted. In terms of biological role, inhibits trypsin activity and prophenoloxidase (PPO) activation, an enzyme essential for both clotting and insect innate immune responses. It does not inhibit activity of chymotrypsin and protease K, and has no effect on phenoloxidase (PO) activity. This is U-reduvitoxin-Pr11a from Platymeris rhadamanthus (Red spot assassin bug).